The sequence spans 196 residues: UMP-CMP kinase (196 aa).

13 to 18 (GAGKGT) provides a ligand contact to ATP. The tract at residues 33–63 (SAGDLLRDERKRPGSQYGELIENYIKEGEIV) is NMP. A ribonucleoside 5'-phosphate contacts are provided by residues Arg39, 61 to 63 (EIV), and 93 to 96 (GFPR). Position 100 (Asn100) interacts with CMP. Positions 133-143 (ERGKSSGRSDD) are LID. Arg134 is a binding site for ATP. Residues Arg140 and Arg151 each coordinate a ribonucleoside 5'-phosphate. Lys179 provides a ligand contact to ATP.

This sequence belongs to the adenylate kinase family. UMP-CMP kinase subfamily. Monomer. Mg(2+) is required as a cofactor.

It localises to the nucleus. It is found in the cytoplasm. The enzyme catalyses CMP + ATP = CDP + ADP. The catalysed reaction is dCMP + ATP = dCDP + ADP. It carries out the reaction UMP + ATP = UDP + ADP. It catalyses the reaction a 2'-deoxyribonucleoside 5'-diphosphate + ATP = a 2'-deoxyribonucleoside 5'-triphosphate + ADP. The enzyme catalyses a ribonucleoside 5'-diphosphate + ATP = a ribonucleoside 5'-triphosphate + ADP. Functionally, catalyzes the phosphorylation of pyrimidine nucleoside monophosphates at the expense of ATP. Plays an important role in de novo pyrimidine nucleotide biosynthesis. Has preference for UMP and CMP as phosphate acceptors. Also displays broad nucleoside diphosphate kinase activity. The polypeptide is UMP-CMP kinase (CMPK) (Gallus gallus (Chicken)).